A 388-amino-acid polypeptide reads, in one-letter code: P2X purinoceptor 4 (388 aa).

Residues 1–33 (MAGCCSVLGSFLFEYDTPRIVLIRSRKVGLMNR) lie on the Cytoplasmic side of the membrane. A helical transmembrane segment spans residues 34-54 (AVQLLILAYVIGWVFVWEKGY). The Extracellular portion of the chain corresponds to 55-338 (QETDSVVSSV…KFDIIPTMIN (284 aa)). Lys67 and Lys69 together coordinate ATP. Residues Lys67 and Lys69 each coordinate CTP. 2 N-linked (GlcNAc...) asparagine glycosylation sites follow: Asn75 and Asn110. Intrachain disulfides connect Cys116–Cys165, Cys126–Cys149, and Cys132–Cys159. N-linked (GlcNAc...) asparagine glycosylation is found at Asn153 and Asn184. 2 residues coordinate ATP: Thr186 and Leu188. Position 186 (Thr186) interacts with CTP. Residues Asn199 and Asn208 are each glycosylated (N-linked (GlcNAc...) asparagine). Cystine bridges form between Cys217–Cys227 and Cys261–Cys270. 3 residues coordinate ATP: Asn293, Arg295, and Lys313. 3 residues coordinate CTP: Asn293, Arg295, and Lys313. The helical transmembrane segment at 339–359 (VGSGLALLGVATVLCDVIVLY) threads the bilayer. Over 360–388 (CMKKKYYYRDKKYKYVEDYEQGLSGEMNQ) the chain is Cytoplasmic.

It belongs to the P2X receptor family. In terms of assembly, functional P2RXs are organized as homomeric and heteromeric trimers. Forms heterotrimer with P2RX1. Interacts with P2RX7 (via C-terminus); this interaction is functional only in the presence of ATP. Forms heterotrimer with P2RX4; functional differences between homomeric P2RX4 and P2RX4/6 heterotrimer are minor. Interacts with AP1M2. Widespread distribution in the brain. Strongly expressed in microglial cells. Also expressed in epithelial cells.

It localises to the cell membrane. Its subcellular location is the lysosome membrane. The catalysed reaction is K(+)(in) = K(+)(out). It catalyses the reaction Na(+)(in) = Na(+)(out). The enzyme catalyses Ca(2+)(in) = Ca(2+)(out). With respect to regulation, activated by ATP. pH-dependent and inhibited by acidic pH. In terms of biological role, ATP-gated nonselective transmembrane cation channel permeable to potassium, sodium and calcium. CTP, but not GTP or UTP, functions as a weak affinity agonist for P2RX4. Activated by extracellularly released ATP, it plays multiple role in immunity and central nervous system physiology. Plays a key role in initial steps of T-cell activation and Ca(2+) microdomain formation. Also participates in basal T-cell activity without TCR/CD3 stimulation. Promotes the differentiation and activation of Th17 cells via expression of retinoic acid-related orphan receptor C/RORC. Upon activation, drives microglia motility via the PI3K/Akt pathway. Could also function as an ATP-gated cation channel of lysosomal membranes. This Rattus norvegicus (Rat) protein is P2X purinoceptor 4 (P2rx4).